A 571-amino-acid chain; its full sequence is Urease subunit alpha (571 aa).

Ni(2+) contacts are provided by histidine 138, histidine 140, and lysine 221. Lysine 221 carries the post-translational modification N6-carboxylysine. Histidine 223 is a substrate binding site. Ni(2+) is bound by residues histidine 250 and histidine 276. Histidine 324 acts as the Proton donor in catalysis. Ni(2+) is bound at residue aspartate 364.

It belongs to the metallo-dependent hydrolases superfamily. Urease alpha subunit family. As to quaternary structure, heterotrimer of UreA (gamma), UreB (beta) and UreC (alpha) subunits. Three heterotrimers associate to form the active enzyme. Ni cation is required as a cofactor. Post-translationally, carboxylation allows a single lysine to coordinate two nickel ions.

Its subcellular location is the cytoplasm. The catalysed reaction is urea + 2 H2O + H(+) = hydrogencarbonate + 2 NH4(+). It functions in the pathway nitrogen metabolism; urea degradation; CO(2) and NH(3) from urea (urease route): step 1/1. The sequence is that of Urease subunit alpha from Staphylococcus aureus (strain JH9).